Reading from the N-terminus, the 462-residue chain is Asparagine--tRNA ligase (462 aa).

This sequence belongs to the class-II aminoacyl-tRNA synthetase family. Homodimer.

It localises to the cytoplasm. The enzyme catalyses tRNA(Asn) + L-asparagine + ATP = L-asparaginyl-tRNA(Asn) + AMP + diphosphate + H(+). The chain is Asparagine--tRNA ligase from Borreliella afzelii (strain PKo) (Borrelia afzelii).